A 231-amino-acid chain; its full sequence is uncharacterized protein (231 aa).

One can recognise an RCK N-terminal domain in the interval 3–119 (RADFCIIGLG…RTMGIREALI (117 aa)). In terms of domain architecture, RCK C-terminal spans 134 to 221 (HGMETEIINL…VNQYLRYINP (88 aa)).

This is an uncharacterized protein from Mycoplasma pneumoniae (strain ATCC 29342 / M129 / Subtype 1) (Mycoplasmoides pneumoniae).